A 584-amino-acid chain; its full sequence is Protein BONZAI 3 (584 aa).

Residues 1–23 form a disordered region; sequence MGGCLSGDVKGGKQAIGGVQQRP. A lipid anchor (N-myristoyl glycine) is attached at G2. C2 domains lie at 34-167 and 178-305; these read HNDA…TLTL and NRNL…NFVY. 5 residues coordinate Ca(2+): D67, D73, D126, D128, and D145. The 220-residue stretch at 344 to 563 folds into the VWFA domain; it reads NFMVAVDFTA…SVVQALLEEL (220 aa).

Belongs to the copine family. In terms of assembly, interacts with BAP1 and BAP2. Ca(2+) is required as a cofactor. Expressed at an extremely low level.

The protein resides in the cell membrane. Its function is as follows. Negative regulator of cell death and defense responses. Repress a number of R genes and may have effects in promoting growth and development. May function in membrane trafficking and in fusion of vesicles with plasma membrane. This chain is Protein BONZAI 3 (BON3), found in Arabidopsis thaliana (Mouse-ear cress).